Consider the following 146-residue polypeptide: Hemoglobin subunit beta (146 aa).

The Globin domain occupies 2-146 (QWTAEEKQLI…VAHALARKYH (145 aa)). 2 residues coordinate heme b: H63 and H92.

The protein belongs to the globin family. In terms of assembly, heterotetramer of two alpha chains and two beta chains. As to expression, red blood cells.

Functionally, involved in oxygen transport from the lung to the various peripheral tissues. The sequence is that of Hemoglobin subunit beta (HBB) from Sturnus vulgaris (Starling).